The following is a 549-amino-acid chain: Cation/acetate symporter ActP (549 aa).

13 helical membrane-spanning segments follow: residues 33 to 53 (WQAI…TYWA), 77 to 97 (LAIA…ALVF), 103 to 123 (GLIY…LIAE), 148 to 168 (ILSA…QMVG), 183 to 203 (IAVV…GMLA), 206 to 226 (WVQI…AFMV), 262 to 282 (ISAL…PHIL), 303 to 323 (GFMG…IMLV), 355 to 375 (LFLG…VAGL), 404 to 424 (VSKI…ILFE), 428 to 448 (IAFM…PIIL), 464 to 484 (GGWL…TIWV), and 493 to 513 (IFPY…GIWF).

Belongs to the sodium:solute symporter (SSF) (TC 2.A.21) family.

The protein resides in the cell inner membrane. In terms of biological role, transports acetate. The protein is Cation/acetate symporter ActP of Salmonella newport (strain SL254).